The following is a 106-amino-acid chain: Large ribosomal subunit protein eL30 (106 aa).

It belongs to the eukaryotic ribosomal protein eL30 family.

This Methanococcus maripaludis (strain C5 / ATCC BAA-1333) protein is Large ribosomal subunit protein eL30.